The sequence spans 467 residues: MTCRTRFAPSPTGYLHIGGARTALYCWLEARHRGGQFVLRIEDTDRERSTQVAIDAILEAMEWLGLGYDEGPIYQTQRIARYQEVAEQLLAQGKAYYAYETREELDAMREAAMAKQEKPRYNGAAREQQLPYRDDPNRVIRFKNPLAGTVVFDDLIKGRIEIANSELDDMVIFRPDGYPTYNFAVVVDDWDMGITEVIRGDDHINNTPRQINIYEALGAPVPKFAHMPMILDEQGAKLSKRTGAADVMQYKDAGYLPHALINYLARLGWSHGDQELFSQQELLDLFDVKDVNSKAARLDMAKLGWVNQHYLKTDDPASIAPQLEYQLRKLGIDVAAGPAAADVVVALRERVQTLKEMAEKAVVWYQPLETYDEAAVIKHLKLGAEVPLGKAREMLAALNEWSVENVSAALHAAAAALELGMGKVAQPLRVAITGTQVSPDISQTVYLAGREGALKRIDAALIKIGAA.

The 'HIGH' region motif lies at proline 9–glycine 19. The 'KMSKS' region motif lies at lysine 237–arginine 241. Lysine 240 provides a ligand contact to ATP.

It belongs to the class-I aminoacyl-tRNA synthetase family. Glutamate--tRNA ligase type 1 subfamily. In terms of assembly, monomer.

It is found in the cytoplasm. It catalyses the reaction tRNA(Glu) + L-glutamate + ATP = L-glutamyl-tRNA(Glu) + AMP + diphosphate. In terms of biological role, catalyzes the attachment of glutamate to tRNA(Glu) in a two-step reaction: glutamate is first activated by ATP to form Glu-AMP and then transferred to the acceptor end of tRNA(Glu). This is Glutamate--tRNA ligase from Xanthomonas campestris pv. campestris (strain 8004).